Consider the following 222-residue polypeptide: von Willebrand factor C domain-containing protein 2-like (222 aa).

The signal sequence occupies residues 1–21; it reads MALHIHEACILLLVIPGLVTS. VWFC domains are found at residues 51-110 and 114-172; these read KGCV…PECK and NFCE…PVCK.

As to quaternary structure, peripherally associated with AMPAR complex. AMPAR complex consists of an inner core made of 4 pore-forming GluA/GRIA proteins (GRIA1, GRIA2, GRIA3 and GRIA4) and 4 major auxiliary subunits arranged in a twofold symmetry. One of the two pairs of distinct binding sites is occupied either by CNIH2, CNIH3 or CACNG2, CACNG3. The other harbors CACNG2, CACNG3, CACNG4, CACNG8 or GSG1L. This inner core of AMPAR complex is complemented by outer core constituents binding directly to the GluA/GRIA proteins at sites distinct from the interaction sites of the inner core constituents. Outer core constituents include at least PRRT1, PRRT2, CKAMP44/SHISA9, FRRS1L and NRN1. The proteins of the inner and outer core serve as a platform for other, more peripherally associated AMPAR constituents, including VWC2L. Alone or in combination, these auxiliary subunits control the gating and pharmacology of the AMPAR complex and profoundly impact their biogenesis and protein processing. As to expression, predominantly expressed in the brain (at protein level). Also detected in bones, including femur and calvaria, heart, lung and kidney. Isoform 5 is predominant in lung and heart, compared to isoforms 1 and 3. Isoform 4 is expressed in femur and calvaria at higher levels than isoforms 1 and 5. Isoforms 1 and 4 are expressed at higher levels than isoform 5 in kidney and brain.

The protein resides in the secreted. It localises to the synapse. Functionally, may play a role in neurogenesis. May promote matrix mineralization, but has been shown to weakly, but significantly inhibit BMP2 and BMP6 activity in a preosteoblastic cell line. The polypeptide is von Willebrand factor C domain-containing protein 2-like (Vwc2l) (Mus musculus (Mouse)).